The chain runs to 143 residues: Ribonuclease P protein component (143 aa).

The tract at residues 111-143 (RVKRKGGGPGGNRRSAPPGSAPLTDDGRLRGEP) is disordered.

This sequence belongs to the RnpA family. In terms of assembly, consists of a catalytic RNA component (M1 or rnpB) and a protein subunit.

The catalysed reaction is Endonucleolytic cleavage of RNA, removing 5'-extranucleotides from tRNA precursor.. In terms of biological role, RNaseP catalyzes the removal of the 5'-leader sequence from pre-tRNA to produce the mature 5'-terminus. It can also cleave other RNA substrates such as 4.5S RNA. The protein component plays an auxiliary but essential role in vivo by binding to the 5'-leader sequence and broadening the substrate specificity of the ribozyme. This is Ribonuclease P protein component from Deinococcus geothermalis (strain DSM 11300 / CIP 105573 / AG-3a).